The chain runs to 126 residues: MSKSIFVVCITLLVVLSPTLNAKMVTYPNGDRHCVMAQGQVISACLQQANGLPHADCCYAINDVNRYVETIYGRLALCKCFQEILKDSRFTKLIGMPEKCAIPNAVPFDPKTDCDRFVEHIWLKMF.

An N-terminal signal peptide occupies residues 1–22 (MSKSIFVVCITLLVVLSPTLNA). Intrachain disulfides connect Cys34-Cys80, Cys45-Cys57, Cys58-Cys100, and Cys78-Cys114.

Belongs to the plant LTP family.

Functionally, plant non-specific lipid-transfer proteins transfer phospholipids as well as galactolipids across membranes. May play a role in wax or cutin deposition in the cell walls of expanding epidermal cells and certain secretory tissues. The sequence is that of Non-specific lipid-transfer protein 15 (LTP15) from Arabidopsis thaliana (Mouse-ear cress).